A 466-amino-acid polypeptide reads, in one-letter code: ATP synthase subunit beta (466 aa).

152-159 (GGAGVGKT) is an ATP binding site.

This sequence belongs to the ATPase alpha/beta chains family. As to quaternary structure, F-type ATPases have 2 components, CF(1) - the catalytic core - and CF(0) - the membrane proton channel. CF(1) has five subunits: alpha(3), beta(3), gamma(1), delta(1), epsilon(1). CF(0) has three main subunits: a(1), b(2) and c(9-12). The alpha and beta chains form an alternating ring which encloses part of the gamma chain. CF(1) is attached to CF(0) by a central stalk formed by the gamma and epsilon chains, while a peripheral stalk is formed by the delta and b chains.

Its subcellular location is the cell inner membrane. It carries out the reaction ATP + H2O + 4 H(+)(in) = ADP + phosphate + 5 H(+)(out). Its function is as follows. Produces ATP from ADP in the presence of a proton gradient across the membrane. The catalytic sites are hosted primarily by the beta subunits. The chain is ATP synthase subunit beta from Helicobacter pylori (strain HPAG1).